The sequence spans 301 residues: N-carbamoylputrescine amidase (301 aa).

The CN hydrolase domain maps to 11–269; sequence VSVAAVQFAC…EDVLVAEFDL (259 aa). The active-site Proton acceptor is the E50. K123 functions as the Proton donor in the catalytic mechanism. C160 (nucleophile) is an active-site residue.

This sequence belongs to the carbon-nitrogen hydrolase superfamily. Homooctamer.

It catalyses the reaction N-carbamoylputrescine + H2O + 2 H(+) = putrescine + NH4(+) + CO2. Its pathway is amine and polyamine biosynthesis; putrescine biosynthesis via agmatine pathway; putrescine from N-carbamoylputrescine (amidase route): step 1/1. In terms of biological role, involved in polyamine biosynthesis. The sequence is that of N-carbamoylputrescine amidase (CPA) from Oryza sativa subsp. japonica (Rice).